The chain runs to 342 residues: Ribosomal RNA small subunit methyltransferase C (342 aa).

It belongs to the methyltransferase superfamily. RsmC family. As to quaternary structure, monomer.

Its subcellular location is the cytoplasm. The catalysed reaction is guanosine(1207) in 16S rRNA + S-adenosyl-L-methionine = N(2)-methylguanosine(1207) in 16S rRNA + S-adenosyl-L-homocysteine + H(+). In terms of biological role, specifically methylates the guanine in position 1207 of 16S rRNA in the 30S particle. In Salmonella enteritidis PT4 (strain P125109), this protein is Ribosomal RNA small subunit methyltransferase C.